Reading from the N-terminus, the 3256-residue chain is Proliferation marker protein Ki-67 (3256 aa).

The FHA domain maps to 27–76 (CLFGRGIECDIRIQLPVVSKQHCKIEIHEQEAILHNFSSTNPTQVNGSVI). The tract at residues 101-199 (SLQNGRKSTE…RNGRNAADPI (99 aa)) is disordered. Residues 107-122 (KSTEFPRKIREQEPAR) show a composition bias toward basic and acidic residues. Phosphoserine is present on residues S125, S128, and S166. Basic and acidic residues predominate over residues 161-173 (NVKEDSTADDSKD). Over residues 174-183 (SVAQGTTNVH) the composition is skewed to polar residues. K245 is covalently cross-linked (Glycyl lysine isopeptide (Lys-Gly) (interchain with G-Cter in SUMO2)). A phosphoserine mark is found at S264, S296, and S308. Disordered regions lie at residues 271 to 426 (ATEK…RGSI) and 513 to 542 (RPELFDENLPPNTPLKRGEAPTKRKSLVMH). The segment covering 314–324 (DQNKGKGRDVE) has biased composition (basic and acidic residues). Residues T328 and T347 each carry the phosphothreonine modification. A compositionally biased stretch (polar residues) spans 349–358 (VQYSQQQNSP). Residues S352, S357, and S374 each carry the phosphoserine modification. T401 carries the phosphothreonine modification. Phosphoserine is present on S411. Residues 414-425 (KPENLSSKTRGS) are compositionally biased toward polar residues. Positions 495–678 (ESEGIPLKRR…AKQTQTKVIK (184 aa)) are positively charged patch (CP). The region spanning 502–549 (KRRRVSFGGHLRPELFDENLPPNTPLKRGEAPTKRKSLVMHTPPVLKK) is the PP1-binding domain. Phosphoserine is present on S538. Residue T543 is modified to Phosphothreonine. Residues 575–632 (SLVISPPAPSPRKTPVASDQRRRSCKTAPASSSKSQTEVPKRGGRKSGNLPSKRVSIS) are disordered. 2 positions are modified to phosphoserine: S579 and S584. Positions 603–612 (PASSSKSQTE) are enriched in polar residues. At S648 the chain carries Phosphoserine. Residues 674–707 (TKVIKHGPQRSMNKRQRRPATPKKPVGEVHSQFS) are disordered. Positions 676-694 (VIKHGPQRSMNKRQRRPAT) are enriched in basic residues. T761 carries the phosphothreonine modification. Residues 853–886 (SLETKTSDTETEPSKTVSTANRSGRSTEFRNIQK) are disordered. S859 carries the post-translational modification Phosphoserine. The span at 866-882 (SKTVSTANRSGRSTEFR) shows a compositional bias: polar residues. A 16 X 122 AA approximate repeats region spans residues 1000–2928 (GKITKMPCQS…ASFQELSQTP (1929 aa)). K167R repeat units lie at residues 1001-1112 (KITK…FQTP), 1123-1234 (KTTK…FQTP), 1245-1356 (KTTK…FQTP), 1367-1477 (KTTK…FQTP), 1488-1597 (KTTK…LFQT), and 1609-1720 (KTAK…FQTP). The residue at position 1017 (T1017) is a Phosphothreonine. Glycyl lysine isopeptide (Lys-Gly) (interchain with G-Cter in SUMO2) cross-links involve residues K1022 and K1035. A disordered region spans residues 1045–1073 (TRTSGETTHTHREPAGDGKSIRTFKESPK). Positions 1052–1072 (THTHREPAGDGKSIRTFKESP) are enriched in basic and acidic residues. At S1071 the chain carries Phosphoserine. A Phosphothreonine modification is found at T1091. Residue K1093 forms a Glycyl lysine isopeptide (Lys-Gly) (interchain with G-Cter in SUMO1); alternate linkage. Residue K1093 forms a Glycyl lysine isopeptide (Lys-Gly) (interchain with G-Cter in SUMO2); alternate linkage. S1098 bears the Phosphoserine mark. The segment at 1109–1151 (FQTPGPSEESMTDEKTTKIACKSPPPESVDTPTSTKQWPKRSL) is disordered. Phosphothreonine is present on T1111. Phosphoserine is present on S1131. At T1139 the chain carries Phosphothreonine. S1142 carries the post-translational modification Phosphoserine. Position 1167 is a phosphothreonine (T1167). Residue S1169 is modified to Phosphoserine. T1176 is subject to Phosphothreonine. Glycyl lysine isopeptide (Lys-Gly) (interchain with G-Cter in SUMO2) cross-links involve residues K1185 and K1188. Position 1193 is a phosphothreonine (T1193). S1207 bears the Phosphoserine mark. At T1233 the chain carries Phosphothreonine. The segment at 1246–1276 (TTKIPCDSPQSDPVDTPTSTKQRPKRSIRKA) is disordered. Residues S1253 and S1256 each carry the phosphoserine modification. Positions 1253 to 1266 (SPQSDPVDTPTSTK) are enriched in polar residues. Phosphothreonine occurs at positions 1261, 1298, 1315, and 1327. The tract at residues 1323–1518 (TENLTGSKRR…PQSKRSLRKV (196 aa)) is disordered. A Phosphoserine modification is found at S1329. Position 1335 is a phosphothreonine (T1335). Residue K1337 forms a Glycyl lysine isopeptide (Lys-Gly) (interchain with G-Cter in SUMO2) linkage. T1355 is modified (phosphothreonine). S1376 carries the phosphoserine modification. T1383 bears the Phosphothreonine mark. S1386 bears the Phosphoserine mark. 2 stretches are compositionally biased toward basic and acidic residues: residues 1394–1406 (PLEKRDVQKELSA) and 1418–1442 (THTDKVPGGEDKSINAFRETAKQKL). T1420 and T1437 each carry phosphothreonine. S1496 is subject to Phosphoserine. T1503 is subject to Phosphothreonine. S1506 bears the Phosphoserine mark. T1540 carries the post-translational modification Phosphothreonine. Phosphotyrosine is present on Y1552. Phosphothreonine occurs at positions 1557 and 1569. Phosphoserine occurs at positions 1571 and 1617. The disordered stretch occupies residues 1597–1675 (TRGHTEESMT…PTGDGKSMKA (79 aa)). K1639 bears the N6-acetyllysine mark. K1643 is covalently cross-linked (Glycyl lysine isopeptide (Lys-Gly) (interchain with G-Cter in SUMO2)). Residues 1660 to 1672 (THTHTEPTGDGKS) are compositionally biased toward basic and acidic residues. Phosphoserine is present on residues S1679 and S1689. Disordered stretches follow at residues 1689-1708 (SLTGSKRQLRTPKGKSEVPE), 1717-1765 (FQTP…ADTE), 1771-1790 (FRKQTPSAGKAMHTPKPAVG), 1801-1824 (TPVQKLDQPGNLPGSNRRLQTRKE), and 1839-1886 (FQTP…KADV). K1703 is covalently cross-linked (Glycyl lysine isopeptide (Lys-Gly) (interchain with G-Cter in SUMO2)). T1719 is subject to Phosphothreonine. S1721 is subject to Phosphoserine. The span at 1722 to 1733 (HTKESMTNEKTT) shows a compositional bias: basic and acidic residues. K167R repeat units lie at residues 1731-1842 (KTTK…FQTP), 1854-1964 (TKKI…FQTP), 1975-2086 (KITE…FQTP), 2097-2204 (KTTK…FQTP), and 2215-2326 (KTTK…FQTP). Phosphoserine is present on S1740. Phosphothreonine occurs at positions 1747, 1764, 1784, and 1801. The residue at position 1815 (S1815) is a Phosphoserine. T1841 is modified (phosphothreonine). Residues S1861 and S1864 each carry the phosphoserine modification. Positions 1861-1874 (SPQSDPADTPTNTK) are enriched in polar residues. Phosphothreonine occurs at positions 1869, 1897, 1906, and 1923. S1937 carries the post-translational modification Phosphoserine. The disordered stretch occupies residues 1961–2002 (FQTPGHTEESMTDDKITEVSCKSPQPDPVKTPTSSKQRLKIS). T1963 bears the Phosphothreonine mark. A compositionally biased stretch (basic and acidic residues) spans 1966 to 1977 (HTEESMTDDKIT). Phosphoserine is present on S1983. An N6-acetyllysine modification is found at K2005. Residue K2009 forms a Glycyl lysine isopeptide (Lys-Gly) (interchain with G-Cter in SUMO1); alternate linkage. K2009 participates in a covalent cross-link: Glycyl lysine isopeptide (Lys-Gly) (interchain with G-Cter in SUMO2); alternate. The interval 2017-2192 (KLTQTSGKTT…TPKGKAQPLE (176 aa)) is disordered. Phosphothreonine is present on residues T2028 and T2065. Composition is skewed to basic and acidic residues over residues 2028–2046 (THRETAGDGKSIKAFKESA) and 2061–2070 (RWPRTPKEEA). K2067 is covalently cross-linked (Glycyl lysine isopeptide (Lys-Gly) (interchain with G-Cter in SUMO1); alternate). Residue K2067 forms a Glycyl lysine isopeptide (Lys-Gly) (interchain with G-Cter in SUMO2); alternate linkage. Position 2072 is a phosphoserine (S2072). T2085 carries the post-translational modification Phosphothreonine. A compositionally biased stretch (basic and acidic residues) spans 2087-2099 (DHTEESTTDDKTT). S2105 is modified (phosphoserine). T2113 bears the Phosphothreonine mark. A phosphoserine mark is found at S2116 and S2135. Residues 2145–2168 (HTDKVPGDEDKGINVFRETAKQKL) show a composition bias toward basic and acidic residues. Phosphothreonine is present on residues T2146, T2163, and T2203. Residues 2205-2400 (ICTDKPTTHE…KPAVSDEKNI (196 aa)) form a disordered region. Phosphoserine is present on S2223. Phosphothreonine is present on residues T2231 and T2233. Position 2239 is a phosphoserine (S2239). The residue at position 2259 (T2259) is a Phosphothreonine. A Phosphoserine modification is found at S2261. T2268, T2285, T2325, T2328, and T2333 each carry phosphothreonine. K167R repeat units follow at residues 2336–2447 (KTTK…FQTP), 2458–2569 (KITE…FSAP), 2580–2688 (KNTK…LSET), 2700–2805 (KATK…GFKD), and 2819–2928 (KTTK…SQTP). S2344 carries the post-translational modification Phosphoserine. T2352 and T2389 each carry phosphothreonine. S2395 carries the post-translational modification Phosphoserine. At T2406 the chain carries Phosphothreonine. S2420 bears the Phosphoserine mark. Phosphothreonine occurs at positions 2426 and 2446. The disordered stretch occupies residues 2445-2480 (QTPGHTEESMTDDKITEVSCKSPQPESFKTSRSSKQ). Residues 2449-2460 (HTEESMTDDKIT) show a composition bias toward basic and acidic residues. Residues 2463-2475 (SCKSPQPESFKTS) are compositionally biased toward polar residues. S2466 is modified (phosphoserine). A Glycyl lysine isopeptide (Lys-Gly) (interchain with G-Cter in SUMO1) cross-link involves residue K2492. Positions 2497-2521 (AVSKLTRTSGETTQTHTEPTGDSKS) are disordered. Polar residues predominate over residues 2501 to 2514 (LTRTSGETTQTHTE). S2505, S2528, and S2588 each carry phosphoserine. Residues 2570 to 3256 (GHTEESMTID…TRSHRDSEDI (687 aa)) are disordered. Basic and acidic residues-rich tracts occupy residues 2609 to 2618 (RKEVKEELSA), 2632 to 2644 (THKEPASGDEGIK), and 2660 to 2675 (EPSRRRPRAPKEKAQP). A Glycyl lysine isopeptide (Lys-Gly) (interchain with G-Cter in SUMO1); alternate cross-link involves residue K2613. K2613 participates in a covalent cross-link: Glycyl lysine isopeptide (Lys-Gly) (interchain with G-Cter in SUMO2); alternate. S2638 is subject to Phosphoserine. Polar residues predominate over residues 2685–2696 (LSETSGHTQESL). S2708 carries the post-translational modification Phosphoserine. K2734 is covalently cross-linked (Glycyl lysine isopeptide (Lys-Gly) (interchain with G-Cter in SUMO1); alternate). K2734 participates in a covalent cross-link: Glycyl lysine isopeptide (Lys-Gly) (interchain with G-Cter in SUMO2); alternate. Composition is skewed to basic and acidic residues over residues 2751–2770 (DADKEPAGEDKGIKALKESA) and 2810–2821 (HTEESMTDDKTT). A phosphoserine mark is found at S2827, S2828, and S2838. A Glycyl lysine isopeptide (Lys-Gly) (interchain with G-Cter in SUMO1); alternate cross-link involves residue K2852. K2852 is covalently cross-linked (Glycyl lysine isopeptide (Lys-Gly) (interchain with G-Cter in SUMO2); alternate). Positions 2869-2881 (THTDKEPVGEGKG) are enriched in basic and acidic residues. The span at 2941 to 2951 (SFTSAPKQTPD) shows a compositional bias: polar residues. A Glycyl lysine isopeptide (Lys-Gly) (interchain with G-Cter in SUMO2) cross-link involves residue K2967. A compositionally biased stretch (polar residues) spans 2982–2991 (KSQSKSNTSL). At K2986 the chain carries N6-acetyllysine. Positions 3029–3039 (KKQRVAPRARG) are enriched in basic residues. 3034–3041 (APRARGKS) contributes to the ATP binding site. S3041 is modified (phosphoserine). 2 stretches are compositionally biased toward basic and acidic residues: residues 3071–3080 (KTNKEEHKLQ) and 3113–3124 (ERIEINRNEKKP). S3128 carries the post-translational modification Phosphoserine. Residues 3138-3154 (DGARKPIPRDKVTENKR) are compositionally biased toward basic and acidic residues. Residues 3207-3223 (SQPAASTLESKSVQRVT) are compositionally biased toward polar residues. Positions 3228 to 3241 (RCAENPKKAEDNVC) are enriched in basic and acidic residues.

In terms of assembly, interacts with KIF15. Interacts (via the FHA domain) with NIFK. Interacts with PPP1CC. Component of a complex at least composed of ZNF335, HCFC1, CCAR2, EMSY, MKI67, RBBP5, ASH2L and WDR5; the complex is formed as a result of interactions between components of a nuclear receptor-mediated transcription complex and a histone methylation complex. Interacts with ZNF335. Post-translationally, hyperphosphorylated by CDK1 in mitosis; hyperphosphorylatiom prevents undergoing liquid-liquid phase separation. Dephosphorylated by PPP1CC at the onset of anaphase. Dephosphorylated by protein phosphatase 2A (PP2A) at the onset of anaphase. Dephosphorylation by protein phosphatase 2A (PP2A) and simultaneous exposure of the positively charged patch (CP) during mitotic exit induce the RNA-dependent formation of a liquid-like condensed phase on the chromosome surface. In terms of processing, ubiquitinated by the APC/C complex after neuronal progenitors exit mitosis during brain development, leading to clearance from constitutive heterochromatin.

The protein localises to the chromosome. The protein resides in the nucleus. It localises to the nucleolus. Protein that associates with the surface of mitotic chromosomes and acts both as a chromosome repellent during early mitosis and chromosome attractant during late mitosis. Required to maintain individual mitotic chromosomes dispersed in the cytoplasm following nuclear envelope disassembly. During early mitosis, relocalizes from nucleoli to the chromosome surface where it forms extended brush structures that cover a substantial fraction of the chromosome surface. The MKI67 brush structure prevents chromosomes from collapsing into a single chromatin mass by forming a steric and electrostatic charge barrier: the protein has a high net electrical charge and acts as a surfactant, dispersing chromosomes and enabling independent chromosome motility. During mitotic anaphase, the MKI67 brush structure collapses and MKI67 switches from a chromosome repellent to a chromosome attractant to promote chromosome clustering and facilitate the exclusion of large cytoplasmic particles from the future nuclear space. Mechanistically, dephosphorylation during mitotic exit and simultaneous exposure of a conserved basic patch induce the RNA-dependent formation of a liquid-like condensed phase on the chromosome surface, promoting coalescence of neighboring chromosome surfaces and clustering of chromosomes. Binds premature ribosomal RNAs during anaphase; promoting liquid-liquid phase separation. Binds DNA, with a preference for supercoiled DNA and AT-rich DNA. Does not contribute to the internal structure of mitotic chromosomes. May play a role in chromatin organization; it is however unclear whether it plays a direct role in chromatin organization or whether it is an indirect consequence of its function in mitotic chromosome. The protein is Proliferation marker protein Ki-67 of Homo sapiens (Human).